The sequence spans 284 residues: Pantothenate synthetase (284 aa).

32-39 (MGALHEGH) lines the ATP pocket. Histidine 39 functions as the Proton donor in the catalytic mechanism. Glutamine 63 lines the (R)-pantoate pocket. Glutamine 63 contacts beta-alanine. 149-152 (GEKD) serves as a coordination point for ATP. Glutamine 155 contributes to the (R)-pantoate binding site. ATP is bound by residues valine 178 and 186–189 (LSSR).

It belongs to the pantothenate synthetase family. Homodimer.

Its subcellular location is the cytoplasm. It catalyses the reaction (R)-pantoate + beta-alanine + ATP = (R)-pantothenate + AMP + diphosphate + H(+). It participates in cofactor biosynthesis; (R)-pantothenate biosynthesis; (R)-pantothenate from (R)-pantoate and beta-alanine: step 1/1. Its function is as follows. Catalyzes the condensation of pantoate with beta-alanine in an ATP-dependent reaction via a pantoyl-adenylate intermediate. This chain is Pantothenate synthetase, found in Chelativorans sp. (strain BNC1).